The following is a 319-amino-acid chain: Acetyl-coenzyme A carboxylase carboxyl transferase subunit alpha (319 aa).

The 262-residue stretch at 32–293 (NVETEVRALR…KAVLLNELDA (262 aa)) folds into the CoA carboxyltransferase C-terminal domain.

This sequence belongs to the AccA family. As to quaternary structure, acetyl-CoA carboxylase is a heterohexamer composed of biotin carboxyl carrier protein (AccB), biotin carboxylase (AccC) and two subunits each of ACCase subunit alpha (AccA) and ACCase subunit beta (AccD).

It localises to the cytoplasm. It catalyses the reaction N(6)-carboxybiotinyl-L-lysyl-[protein] + acetyl-CoA = N(6)-biotinyl-L-lysyl-[protein] + malonyl-CoA. It participates in lipid metabolism; malonyl-CoA biosynthesis; malonyl-CoA from acetyl-CoA: step 1/1. Component of the acetyl coenzyme A carboxylase (ACC) complex. First, biotin carboxylase catalyzes the carboxylation of biotin on its carrier protein (BCCP) and then the CO(2) group is transferred by the carboxyltransferase to acetyl-CoA to form malonyl-CoA. The chain is Acetyl-coenzyme A carboxylase carboxyl transferase subunit alpha from Xanthomonas oryzae pv. oryzae (strain MAFF 311018).